Here is a 150-residue protein sequence, read N- to C-terminus: 3-dehydroquinate dehydratase (150 aa).

Residue tyrosine 26 is the Proton acceptor of the active site. Asparagine 77, histidine 83, and aspartate 90 together coordinate substrate. The Proton donor role is filled by histidine 103. Residues 104–105 (LS) and arginine 114 each bind substrate.

Belongs to the type-II 3-dehydroquinase family. As to quaternary structure, homododecamer.

The catalysed reaction is 3-dehydroquinate = 3-dehydroshikimate + H2O. Its pathway is metabolic intermediate biosynthesis; chorismate biosynthesis; chorismate from D-erythrose 4-phosphate and phosphoenolpyruvate: step 3/7. Catalyzes a trans-dehydration via an enolate intermediate. This Citrobacter koseri (strain ATCC BAA-895 / CDC 4225-83 / SGSC4696) protein is 3-dehydroquinate dehydratase.